Here is a 281-residue protein sequence, read N- to C-terminus: Pantothenate synthetase (281 aa).

ATP is bound at residue 30-37 (MGNLHQGH). His-37 functions as the Proton donor in the catalytic mechanism. A (R)-pantoate-binding site is contributed by Gln-61. Beta-alanine is bound at residue Gln-61. Residue 149–152 (GRKD) participates in ATP binding. Gln-155 contacts (R)-pantoate. ATP-binding positions include Ile-178 and 186 to 189 (MSSR).

This sequence belongs to the pantothenate synthetase family. Homodimer.

It is found in the cytoplasm. The catalysed reaction is (R)-pantoate + beta-alanine + ATP = (R)-pantothenate + AMP + diphosphate + H(+). It functions in the pathway cofactor biosynthesis; (R)-pantothenate biosynthesis; (R)-pantothenate from (R)-pantoate and beta-alanine: step 1/1. Functionally, catalyzes the condensation of pantoate with beta-alanine in an ATP-dependent reaction via a pantoyl-adenylate intermediate. The chain is Pantothenate synthetase from Shewanella denitrificans (strain OS217 / ATCC BAA-1090 / DSM 15013).